We begin with the raw amino-acid sequence, 482 residues long: tRNA sulfurtransferase (482 aa).

Residues 61 to 165 (LAIRDALTRI…DDRLLLIKGR (105 aa)) enclose the THUMP domain. ATP is bound by residues 183–184 (LI), Lys265, Gly287, and Gln296. Cys344 and Cys456 are disulfide-bonded. A Rhodanese domain is found at 404 to 482 (FGPNDVILDI…GFENVKVYRP (79 aa)). Cys456 serves as the catalytic Cysteine persulfide intermediate.

This sequence belongs to the ThiI family.

The protein localises to the cytoplasm. It catalyses the reaction [ThiI sulfur-carrier protein]-S-sulfanyl-L-cysteine + a uridine in tRNA + 2 reduced [2Fe-2S]-[ferredoxin] + ATP + H(+) = [ThiI sulfur-carrier protein]-L-cysteine + a 4-thiouridine in tRNA + 2 oxidized [2Fe-2S]-[ferredoxin] + AMP + diphosphate. The enzyme catalyses [ThiS sulfur-carrier protein]-C-terminal Gly-Gly-AMP + S-sulfanyl-L-cysteinyl-[cysteine desulfurase] + AH2 = [ThiS sulfur-carrier protein]-C-terminal-Gly-aminoethanethioate + L-cysteinyl-[cysteine desulfurase] + A + AMP + 2 H(+). The protein operates within cofactor biosynthesis; thiamine diphosphate biosynthesis. Catalyzes the ATP-dependent transfer of a sulfur to tRNA to produce 4-thiouridine in position 8 of tRNAs, which functions as a near-UV photosensor. Also catalyzes the transfer of sulfur to the sulfur carrier protein ThiS, forming ThiS-thiocarboxylate. This is a step in the synthesis of thiazole, in the thiamine biosynthesis pathway. The sulfur is donated as persulfide by IscS. The protein is tRNA sulfurtransferase of Salmonella enteritidis PT4 (strain P125109).